A 395-amino-acid chain; its full sequence is Chorismate synthase (395 aa).

Residues R40 and R46 each coordinate NADP(+). Residues 98 to 120 (LPREGRNAPLSRPRPGHADLTGM) are disordered. FMN-binding positions include 134-136 (RSS), 256-257 (QA), G301, 316-320 (KPIPS), and R342.

The protein belongs to the chorismate synthase family. Homotetramer. FMNH2 serves as cofactor.

The enzyme catalyses 5-O-(1-carboxyvinyl)-3-phosphoshikimate = chorismate + phosphate. Its pathway is metabolic intermediate biosynthesis; chorismate biosynthesis; chorismate from D-erythrose 4-phosphate and phosphoenolpyruvate: step 7/7. Its function is as follows. Catalyzes the anti-1,4-elimination of the C-3 phosphate and the C-6 proR hydrogen from 5-enolpyruvylshikimate-3-phosphate (EPSP) to yield chorismate, which is the branch point compound that serves as the starting substrate for the three terminal pathways of aromatic amino acid biosynthesis. This reaction introduces a second double bond into the aromatic ring system. This is Chorismate synthase from Bifidobacterium longum subsp. infantis (strain ATCC 15697 / DSM 20088 / JCM 1222 / NCTC 11817 / S12).